We begin with the raw amino-acid sequence, 330 residues long: Methionyl-tRNA formyltransferase (330 aa).

112-115 (SLLP) contributes to the (6S)-5,6,7,8-tetrahydrofolate binding site.

This sequence belongs to the Fmt family.

It carries out the reaction L-methionyl-tRNA(fMet) + (6R)-10-formyltetrahydrofolate = N-formyl-L-methionyl-tRNA(fMet) + (6S)-5,6,7,8-tetrahydrofolate + H(+). Functionally, attaches a formyl group to the free amino group of methionyl-tRNA(fMet). The formyl group appears to play a dual role in the initiator identity of N-formylmethionyl-tRNA by promoting its recognition by IF2 and preventing the misappropriation of this tRNA by the elongation apparatus. The protein is Methionyl-tRNA formyltransferase of Synechocystis sp. (strain ATCC 27184 / PCC 6803 / Kazusa).